Reading from the N-terminus, the 437-residue chain is Adenylosuccinate synthetase (437 aa).

GTP-binding positions include Gly-12 to Lys-18 and Gly-40 to Thr-42. Asp-13 (proton acceptor) is an active-site residue. Mg(2+) contacts are provided by Asp-13 and Gly-40. Residues Asp-13–Lys-16, Asn-38–His-41, Thr-131, Arg-145, Gln-225, and Thr-240 each bind IMP. Catalysis depends on His-41, which acts as the Proton donor. Residues Thr-281–Phe-304 form a disordered region. A compositionally biased stretch (basic and acidic residues) spans Gly-288 to Glu-303. Position 306–312 (Thr-306–Arg-312) interacts with substrate. Arg-310 contributes to the IMP binding site. Residues Arg-312, Lys-338 to Asp-340, and Ser-420 to Ser-422 each bind GTP.

The protein belongs to the adenylosuccinate synthetase family. In terms of assembly, homodimer. It depends on Mg(2+) as a cofactor.

Its subcellular location is the cytoplasm. The catalysed reaction is IMP + L-aspartate + GTP = N(6)-(1,2-dicarboxyethyl)-AMP + GDP + phosphate + 2 H(+). It participates in purine metabolism; AMP biosynthesis via de novo pathway; AMP from IMP: step 1/2. Its function is as follows. Plays an important role in the de novo pathway of purine nucleotide biosynthesis. Catalyzes the first committed step in the biosynthesis of AMP from IMP. The chain is Adenylosuccinate synthetase from Ruegeria sp. (strain TM1040) (Silicibacter sp.).